The chain runs to 424 residues: Kynureninase (424 aa).

Pyridoxal 5'-phosphate is bound by residues L109, T110, 137-140 (FPSD), D222, H225, and Y247. At K248 the chain carries N6-(pyridoxal phosphate)lysine. The pyridoxal 5'-phosphate site is built by W278 and N306.

This sequence belongs to the kynureninase family. As to quaternary structure, homodimer. The cofactor is pyridoxal 5'-phosphate.

The catalysed reaction is L-kynurenine + H2O = anthranilate + L-alanine + H(+). The enzyme catalyses 3-hydroxy-L-kynurenine + H2O = 3-hydroxyanthranilate + L-alanine + H(+). It functions in the pathway amino-acid degradation; L-kynurenine degradation; L-alanine and anthranilate from L-kynurenine: step 1/1. The protein operates within cofactor biosynthesis; NAD(+) biosynthesis; quinolinate from L-kynurenine: step 2/3. Its function is as follows. Catalyzes the cleavage of L-kynurenine (L-Kyn) and L-3-hydroxykynurenine (L-3OHKyn) into anthranilic acid (AA) and 3-hydroxyanthranilic acid (3-OHAA), respectively. In Koribacter versatilis (strain Ellin345), this protein is Kynureninase.